A 134-amino-acid polypeptide reads, in one-letter code: Complexin-2 (134 aa).

Positions 1–114 (MDFVMKQALG…CGDEEEEEEE (114 aa)) are disordered. A compositionally biased stretch (basic and acidic residues) spans 15–85 (DMGKMLGGEE…EEKEAEEKAA (71 aa)). The stretch at 28–84 (PDAQKKEEERQEALRQQEEERKAKHARMEAEREKVRQQIRDKYGLKKKEEKEAEEKA) forms a coiled coil. Residues 41–97 (LRQQEEERKAKHARMEAEREKVRQQIRDKYGLKKKEEKEAEEKAALEQPCEGSLTRP) form an interaction with the SNARE complex region. A Phosphoserine modification is found at Ser-93.

This sequence belongs to the complexin/synaphin family. In terms of assembly, binds to the SNARE core complex containing SNAP25, VAMP2 and STX1A. Nervous system. Also present in adrenal chromaffin cells (at protein level).

The protein localises to the cytoplasm. The protein resides in the cytosol. It is found in the presynapse. Its subcellular location is the nucleus. It localises to the perikaryon. Functionally, negatively regulates the formation of synaptic vesicle clustering at active zone to the presynaptic membrane in postmitotic neurons. Positively regulates a late step in exocytosis of various cytoplasmic vesicles, such as synaptic vesicles and other secretory vesicles. Also involved in mast cell exocytosis. The protein is Complexin-2 (CPLX2) of Bos taurus (Bovine).